The chain runs to 567 residues: Glutamine-dependent NAD(+) synthetase (567 aa).

The region spanning 2-242 is the CN hydrolase domain; the sequence is LNLTLAQLNF…EDILTVTLDL (241 aa). Glutamate 41 (proton acceptor; for glutaminase activity) is an active-site residue. Lysine 109 functions as the For glutaminase activity in the catalytic mechanism. Tyrosine 115 contacts L-glutamine. Catalysis depends on cysteine 145, which acts as the Nucleophile; for glutaminase activity. Residues serine 172 and lysine 178 each contribute to the L-glutamine site. Positions 287–567 are ligase; it reads PKEEEEIYAA…RMPVTNKFFK (281 aa). Position 316-323 (316-323) interacts with ATP; the sequence is GLSGGIDS. Asparagine 399 serves as a coordination point for deamido-NAD(+). Threonine 423 provides a ligand contact to ATP. Residues glutamate 428 and lysine 538 each coordinate deamido-NAD(+).

The protein in the C-terminal section; belongs to the NAD synthetase family.

It carries out the reaction deamido-NAD(+) + L-glutamine + ATP + H2O = L-glutamate + AMP + diphosphate + NAD(+) + H(+). The protein operates within cofactor biosynthesis; NAD(+) biosynthesis; NAD(+) from deamido-NAD(+) (L-Gln route): step 1/1. Functionally, catalyzes the ATP-dependent amidation of deamido-NAD to form NAD. Uses L-glutamine as a nitrogen source. This is Glutamine-dependent NAD(+) synthetase from Aquifex aeolicus (strain VF5).